We begin with the raw amino-acid sequence, 450 residues long: Sulfide:quinone oxidoreductase, mitochondrial (450 aa).

FAD contacts are provided by residues 53 to 54 (SG), glutamate 75, glutamine 83, and valine 118. An N6-acetyllysine modification is found at lysine 173. Cysteine 201 acts as the Cysteine persulfide intermediate in catalysis. A disulfide bridge connects residues cysteine 201 and cysteine 379. Aspartate 336 is a binding site for FAD. The residue at position 343 (serine 343) is a Phosphoserine. 344 to 347 (KTAA) lines the FAD pocket. Cysteine 379 functions as the Cysteine persulfide intermediate in the catalytic mechanism.

Belongs to the SQRD family. The cofactor is FAD.

It is found in the mitochondrion. The enzyme catalyses ubiquinone-10 + hydrogen sulfide + sulfite + 2 H(+) = ubiquinol-10 + thiosulfate. The catalysed reaction is a quinone + hydrogen sulfide + glutathione + H(+) = S-sulfanylglutathione + a quinol. It carries out the reaction ubiquinone-10 + hydrogen sulfide + glutathione + H(+) = S-sulfanylglutathione + ubiquinol-10. In terms of biological role, catalyzes the oxidation of hydrogen sulfide with the help of a quinone, such as ubiquinone-10, giving rise to thiosulfate and ultimately to sulfane (molecular sulfur) atoms. Requires an additional electron acceptor; can use sulfite, sulfide or cyanide (in vitro). It is believed the in vivo electron acceptor is glutathione. This is Sulfide:quinone oxidoreductase, mitochondrial from Homo sapiens (Human).